The sequence spans 164 residues: HTH-type transcriptional regulator IscR (164 aa).

Residues 2–131 (RLTSKGRYAV…NNITLDELVN (130 aa)) enclose the HTH rrf2-type domain. Positions 28–51 (LADISERQGISLSYLEQLFSRLRK) form a DNA-binding region, H-T-H motif. Cysteine 92, cysteine 98, and cysteine 104 together coordinate [2Fe-2S] cluster.

It depends on [2Fe-2S] cluster as a cofactor.

Functionally, regulates the transcription of several operons and genes involved in the biogenesis of Fe-S clusters and Fe-S-containing proteins. The sequence is that of HTH-type transcriptional regulator IscR from Pectobacterium atrosepticum (strain SCRI 1043 / ATCC BAA-672) (Erwinia carotovora subsp. atroseptica).